We begin with the raw amino-acid sequence, 1206 residues long: DNA-directed RNA polymerase subunit beta' (1206 aa).

Residues Cys60, Cys62, Cys75, and Cys78 each coordinate Zn(2+). Asp449, Asp451, and Asp453 together coordinate Mg(2+). 4 residues coordinate Zn(2+): Cys822, Cys896, Cys903, and Cys906.

This sequence belongs to the RNA polymerase beta' chain family. The RNAP catalytic core consists of 2 alpha, 1 beta, 1 beta' and 1 omega subunit. When a sigma factor is associated with the core the holoenzyme is formed, which can initiate transcription. Mg(2+) is required as a cofactor. Requires Zn(2+) as cofactor.

The enzyme catalyses RNA(n) + a ribonucleoside 5'-triphosphate = RNA(n+1) + diphosphate. In terms of biological role, DNA-dependent RNA polymerase catalyzes the transcription of DNA into RNA using the four ribonucleoside triphosphates as substrates. The chain is DNA-directed RNA polymerase subunit beta' from Staphylococcus haemolyticus (strain JCSC1435).